Consider the following 444-residue polypeptide: Cysteine proteinase 2 (444 aa).

Residues 1–19 (MATSRAALCAVAVVCVVLA) constitute a signal peptide (or 27). A propeptide spans 20–124 (AACAPARAIH…HYRKARADLS (105 aa)) (activation peptide). C147 and C188 are disulfide-bonded. C150 is an active-site residue. N228 is a glycosylation site (N-linked (GlcNAc...) asparagine). Residues H289 and N309 contribute to the active site. A glycan (N-linked (GlcNAc...) asparagine) is linked at N372.

The protein belongs to the peptidase C1 family.

It is found in the lysosome. In terms of biological role, the cysteine proteinases have a potential role in host-parasite interaction and virulence. In Leishmania pifanoi, this protein is Cysteine proteinase 2 (CYS2).